The following is a 618-amino-acid chain: tRNA endonuclease vms-1 (618 aa).

The C2H2-type zinc finger occupies 59–85 (DQCTTCNCPVDFGDRAVLLEHYQSLFH). A VLRF1 domain is found at 170-311 (RPFDCAIFLW…SDCWQRLQQV (142 aa)). The active site involves Gln213. ANK repeat units lie at residues 437–466 (NRST…CDSS) and 470–496 (GAGL…VKNE). The segment at 502–539 (ARTHIPEPKKKVELTEEQEREQAERKKEKKARQKEKEK) is disordered. The span at 505-515 (HIPEPKKKVEL) shows a compositional bias: basic and acidic residues. A coiled-coil region spans residues 510–557 (KKKVELTEEQEREQAERKKEKKARQKEKEKLKKEIAKRDVEEMEERQK).

It belongs to the ANKZF1/VMS1 family. As to expression, in larval stages and in adults, expressed in intestinal cells, specific neurons in the head and the tail, and in the ventral nerve cord.

Its subcellular location is the cytoplasm. The protein localises to the mitochondrion. In terms of biological role, endonuclease that cleaves polypeptidyl-tRNAs downstream of the ribosome-associated quality control (RQC) pathway to release incompletely synthesized polypeptides for degradation. The RQC pathway disassembles aberrantly stalled translation complexes to recycle or degrade the constituent parts. Dispensable for viability and growth but is required for protection against oxidative stress and for wild-type life span. The sequence is that of tRNA endonuclease vms-1 (vms-1) from Caenorhabditis elegans.